A 345-amino-acid polypeptide reads, in one-letter code: Uroporphyrinogen decarboxylase (345 aa).

Substrate is bound by residues 27–31 (RQAGR), D77, Y152, S207, and H323.

The protein belongs to the uroporphyrinogen decarboxylase family. As to quaternary structure, homodimer.

It is found in the cytoplasm. The enzyme catalyses uroporphyrinogen III + 4 H(+) = coproporphyrinogen III + 4 CO2. Its pathway is porphyrin-containing compound metabolism; protoporphyrin-IX biosynthesis; coproporphyrinogen-III from 5-aminolevulinate: step 4/4. Catalyzes the decarboxylation of four acetate groups of uroporphyrinogen-III to yield coproporphyrinogen-III. The polypeptide is Uroporphyrinogen decarboxylase (Maricaulis maris (strain MCS10) (Caulobacter maris)).